A 174-amino-acid chain; its full sequence is Chorismate pyruvate-lyase (174 aa).

Positions 36, 78, 116, and 157 each coordinate substrate.

This sequence belongs to the UbiC family. In terms of assembly, monomer.

The protein localises to the cytoplasm. It catalyses the reaction chorismate = 4-hydroxybenzoate + pyruvate. The protein operates within cofactor biosynthesis; ubiquinone biosynthesis. Removes the pyruvyl group from chorismate, with concomitant aromatization of the ring, to provide 4-hydroxybenzoate (4HB) for the ubiquinone pathway. In Yersinia pestis bv. Antiqua (strain Angola), this protein is Chorismate pyruvate-lyase.